The chain runs to 1847 residues: Replication factor C small subunit (1847 aa).

3 consecutive DOD-type homing endonuclease domains span residues 179 to 311 (WLGY…RFGI), 780 to 927 (MLGL…ISGI), and 1348 to 1508 (LLGF…EFEV).

It belongs to the activator 1 small subunits family. RfcS subfamily. As to quaternary structure, heteromultimer composed of small subunits (RfcS) and large subunits (RfcL). In terms of processing, this protein undergoes a protein self splicing that involves a post-translational excision of the intervening region (intein) followed by peptide ligation.

In terms of biological role, part of the RFC clamp loader complex which loads the PCNA sliding clamp onto DNA. The chain is Replication factor C small subunit (rfcS) from Methanocaldococcus jannaschii (strain ATCC 43067 / DSM 2661 / JAL-1 / JCM 10045 / NBRC 100440) (Methanococcus jannaschii).